A 444-amino-acid polypeptide reads, in one-letter code: CCA-adding enzyme (444 aa).

The ATP site is built by serine 57 and arginine 60. The CTP site is built by serine 57 and arginine 60. Residues aspartate 69, aspartate 71, and aspartate 124 each coordinate Mg(2+). The ATP site is built by histidine 147, lysine 168, and tyrosine 177. The CTP site is built by histidine 147, lysine 168, and tyrosine 177.

Belongs to the tRNA nucleotidyltransferase/poly(A) polymerase family. Archaeal CCA-adding enzyme subfamily. In terms of assembly, homodimer. Mg(2+) serves as cofactor.

The catalysed reaction is a tRNA precursor + 2 CTP + ATP = a tRNA with a 3' CCA end + 3 diphosphate. It carries out the reaction a tRNA with a 3' CCA end + 2 CTP + ATP = a tRNA with a 3' CCACCA end + 3 diphosphate. Catalyzes the addition and repair of the essential 3'-terminal CCA sequence in tRNAs without using a nucleic acid template. Adds these three nucleotides in the order of C, C, and A to the tRNA nucleotide-73, using CTP and ATP as substrates and producing inorganic pyrophosphate. tRNA 3'-terminal CCA addition is required both for tRNA processing and repair. Also involved in tRNA surveillance by mediating tandem CCA addition to generate a CCACCA at the 3' terminus of unstable tRNAs. While stable tRNAs receive only 3'-terminal CCA, unstable tRNAs are marked with CCACCA and rapidly degraded. This chain is CCA-adding enzyme, found in Methanococcus maripaludis (strain C7 / ATCC BAA-1331).